A 425-amino-acid chain; its full sequence is Diacetylchitobiose binding protein DasA (425 aa).

The signal sequence occupies residues 1-20 (MKRKLIAAIGIAGMMVSIAA). C21 is lipidated: N-palmitoyl cysteine. C21 carries the S-diacylglycerol cysteine lipid modification.

This sequence belongs to the bacterial solute-binding protein 1 family. As to quaternary structure, the complex is composed of two ATP-binding proteins (MsiK), two transmembrane proteins (DasB and DasC) and a solute-binding protein (DasA).

The protein resides in the cell membrane. Its function is as follows. Part of the ABC transporter complex DasABC-MsiK involved in N,N'-diacetylchitobiose ((GlcNAc)2) uptake. Binds specifically to (GlcNAc)2. Can also bind to GlcNAc, (GlcNAc)3, (GlcNAc)4 and (GlcNAc)5, but it exhibits the highest affinity for (GlcNAc)2. Involved in the control of morphological differentiation. This is Diacetylchitobiose binding protein DasA from Streptomyces coelicolor (strain ATCC BAA-471 / A3(2) / M145).